A 382-amino-acid polypeptide reads, in one-letter code: Chorismate synthase (382 aa).

R39 and R45 together coordinate NADP(+). Residues R127–S129, Q245–A246, G290, K305–T309, and R331 contribute to the FMN site.

This sequence belongs to the chorismate synthase family. In terms of assembly, homotetramer. FMNH2 is required as a cofactor.

It catalyses the reaction 5-O-(1-carboxyvinyl)-3-phosphoshikimate = chorismate + phosphate. Its pathway is metabolic intermediate biosynthesis; chorismate biosynthesis; chorismate from D-erythrose 4-phosphate and phosphoenolpyruvate: step 7/7. Its function is as follows. Catalyzes the anti-1,4-elimination of the C-3 phosphate and the C-6 proR hydrogen from 5-enolpyruvylshikimate-3-phosphate (EPSP) to yield chorismate, which is the branch point compound that serves as the starting substrate for the three terminal pathways of aromatic amino acid biosynthesis. This reaction introduces a second double bond into the aromatic ring system. The protein is Chorismate synthase of Desulfitobacterium hafniense (strain Y51).